Here is a 342-residue protein sequence, read N- to C-terminus: uncharacterized protein (342 aa).

Zn(2+) contacts are provided by Cys41, His63, Cys94, Cys97, Cys100, Cys108, and Glu149.

This sequence belongs to the zinc-containing alcohol dehydrogenase family. It depends on Zn(2+) as a cofactor.

This is an uncharacterized protein from Haemophilus influenzae (strain ATCC 51907 / DSM 11121 / KW20 / Rd).